The sequence spans 741 residues: Catalase-peroxidase 2 (741 aa).

The N-terminal stretch at 1 to 28 is a signal peptide; it reads MQRNRIAKSVLAALAVIAMSAGSISARA. Residues 107 to 228 constitute a cross-link (tryptophyl-tyrosyl-methioninium (Trp-Tyr) (with M-254)); sequence WHGAGTYRTY…LAATQMGLIY (122 aa). H108 serves as the catalytic Proton acceptor. Positions 228-254 form a cross-link, tryptophyl-tyrosyl-methioninium (Tyr-Met) (with W-107); that stretch reads YVNPEGPNGNPDPVAAAQDIREAFGRM. H269 serves as a coordination point for heme b.

It belongs to the peroxidase family. Peroxidase/catalase subfamily. As to quaternary structure, homodimer or homotetramer. The cofactor is heme b. Post-translationally, formation of the three residue Trp-Tyr-Met cross-link is important for the catalase, but not the peroxidase activity of the enzyme.

It catalyses the reaction H2O2 + AH2 = A + 2 H2O. The enzyme catalyses 2 H2O2 = O2 + 2 H2O. In terms of biological role, bifunctional enzyme with both catalase and broad-spectrum peroxidase activity. The polypeptide is Catalase-peroxidase 2 (Burkholderia vietnamiensis (strain G4 / LMG 22486) (Burkholderia cepacia (strain R1808))).